The following is a 938-amino-acid chain: MLRKVRSWTEIWRWATLLFLFYHLGYVCGQIRYPVPEESQEGTFVGNVAQDFLLDTDSLSARRLQVAGEVNQRHFRVDLDSGALLIKNPIDREALCGLSASCIVPLEFVTEGPLEMYRAEVEIVDVNDHAPRFPRQQLDLEIGEAAPPGQRFPLEKAQDADVGSNSISSYRLSSNEHFALDVKKRSDGSLVPELLLEKPLDREKQSDYRLVLTAVDGGNPPRSGTAELRVSVLDVNDNAPAFQQSSYRISVLESAPAGMVLIQLNASDPDLGPSGNVTFYFSGHTPDRVRNLFSLHPTTGKLTLLGPLDFESENYYEFDVRARDGGSPAMEQHCSLRVDLLDVNDNAPYITVTSELGTLPESAEPGTVVALISVQDPDSGSNGDVSLRIPDHLPFALKSAFRNQFSLVTAGPLDREAKSSYDIMVTASDAGNPPLSTHRTIFLNISDVNDNPPSFFQRSHEVFVPENNRPGDLLCSLAASDPDSGLNALISYSLLEPRNRDVSASSFISLNPQTGAVHATRSFDYEQTQTLQFEVQARDRGNPPLSSTVTVRLFVLDLNDNAPAVLRPRARPGSLCPQALPPSVGAGHLITKVTAVDLDSGYNAWVSYQLLEAPDPSLFAVSRYAGEVRTAVPIPADLPPQKLVIVVKDSGSPPLSTSVTLLVSLEEDTHPVVPDLRESSAPREGESRLTLYLAVSLVAICFVSFGSFVALLSKCLRGAACGVTCFPAGTCACLTRSRRREGLPPSNGILRIQLGSDDPIKFVDVGGHSHGCTPLASAPTRSDSFMMVKSPSAPMAGEPVRPSCPPSDLLYGLEQAPPNTDWRFSQAQRPGTSGSQNGDDTGTWPNNQFDTEMLQAMILASASEAADGSSTLGGGAGTMGLSARYGPQFTLQHVPDYRQNVYIPGSNATLTNAAGKRDGKAPAGGNGNKKKSGKKEKK.

An N-terminal signal peptide occupies residues 1-29; it reads MLRKVRSWTEIWRWATLLFLFYHLGYVCG. Cadherin domains lie at 30–133, 134–242, 243–350, 351–455, 456–565, and 572–676; these read QIRY…APRF, PRQQ…APAF, QQSS…APYI, TVTS…PPSF, FQRS…APAV, and PGSL…VPDL. At 30 to 692 the chain is on the extracellular side; sequence QIRYPVPEES…REGESRLTLY (663 aa). Asn-265, Asn-276, and Asn-444 each carry an N-linked (GlcNAc...) asparagine glycan. A helical transmembrane segment spans residues 693–713; that stretch reads LAVSLVAICFVSFGSFVALLS. The Cytoplasmic portion of the chain corresponds to 714-938; the sequence is KCLRGAACGV…KKKSGKKEKK (225 aa). Disordered stretches follow at residues 791 to 847 and 908 to 938; these read PSAP…WPNN and ATLT…KEKK. Positions 822-847 are enriched in polar residues; it reads WRFSQAQRPGTSGSQNGDDTGTWPNN. Positions 928–938 are enriched in basic residues; it reads NKKKSGKKEKK.

The protein resides in the cell membrane. Its function is as follows. Potential calcium-dependent cell-adhesion protein. May be involved in the establishment and maintenance of specific neuronal connections in the brain. In Homo sapiens (Human), this protein is Protocadherin gamma-C4 (PCDHGC4).